The following is a 422-amino-acid chain: Putative polyketide beta-ketoacyl synthase 1 (422 aa).

One can recognise a Ketosynthase family 3 (KS3) domain in the interval 2–416 (TRRVAVTGIG…GFQSAVLLTG (415 aa)). Catalysis depends on for beta-ketoacyl synthase activity residues cysteine 169, histidine 309, and histidine 346.

Belongs to the thiolase-like superfamily. Beta-ketoacyl-ACP synthases family.

It functions in the pathway antibiotic biosynthesis; curamycin biosynthesis. This is Putative polyketide beta-ketoacyl synthase 1 (curA) from Streptomyces cyaneus (Streptomyces curacoi).